The chain runs to 202 residues: Inosine triphosphate pyrophosphatase (202 aa).

Residue 8–13 participates in ITP binding; that stretch reads TGNANK. Glutamate 55 is a Mg(2+) binding site. Residues lysine 67, 83-84, lysine 100, 159-162, lysine 182, and 187-188 contribute to the ITP site; these read DT, FGWD, and HR.

This sequence belongs to the HAM1 NTPase family. As to quaternary structure, homodimer. Mg(2+) is required as a cofactor. Requires Mn(2+) as cofactor.

Its subcellular location is the cytoplasm. It localises to the nucleus. The catalysed reaction is ITP + H2O = IMP + diphosphate + H(+). It carries out the reaction dITP + H2O = dIMP + diphosphate + H(+). It catalyses the reaction XTP + H2O = XMP + diphosphate + H(+). Functionally, pyrophosphatase that hydrolyzes non-canonical purine nucleotides such as inosine triphosphate (ITP), deoxyinosine triphosphate (dITP) or xanthosine 5'-triphosphate (XTP) to their respective monophosphate derivatives. The enzyme does not distinguish between the deoxy- and ribose forms. Probably excludes non-canonical purines from RNA and DNA precursor pools, thus preventing their incorporation into RNA and DNA and avoiding chromosomal lesions. This chain is Inosine triphosphate pyrophosphatase, found in Candida albicans (strain SC5314 / ATCC MYA-2876) (Yeast).